Here is a 188-residue protein sequence, read N- to C-terminus: Acireductone dioxygenase (188 aa).

Fe(2+) is bound by residues His-97, His-99, Glu-103, and His-141. Residues His-97, His-99, Glu-103, and His-141 each coordinate Ni(2+).

This sequence belongs to the acireductone dioxygenase (ARD) family. In terms of assembly, monomer. It depends on Fe(2+) as a cofactor. Requires Ni(2+) as cofactor.

The enzyme catalyses 1,2-dihydroxy-5-(methylsulfanyl)pent-1-en-3-one + O2 = 3-(methylsulfanyl)propanoate + CO + formate + 2 H(+). It carries out the reaction 1,2-dihydroxy-5-(methylsulfanyl)pent-1-en-3-one + O2 = 4-methylsulfanyl-2-oxobutanoate + formate + 2 H(+). It participates in amino-acid biosynthesis; L-methionine biosynthesis via salvage pathway; L-methionine from S-methyl-5-thio-alpha-D-ribose 1-phosphate: step 5/6. Its function is as follows. Catalyzes 2 different reactions between oxygen and the acireductone 1,2-dihydroxy-3-keto-5-methylthiopentene (DHK-MTPene) depending upon the metal bound in the active site. Fe-containing acireductone dioxygenase (Fe-ARD) produces formate and 2-keto-4-methylthiobutyrate (KMTB), the alpha-ketoacid precursor of methionine in the methionine recycle pathway. Ni-containing acireductone dioxygenase (Ni-ARD) produces methylthiopropionate, carbon monoxide and formate, and does not lie on the methionine recycle pathway. The sequence is that of Acireductone dioxygenase from Xanthomonas axonopodis pv. citri (strain 306).